The primary structure comprises 359 residues: 4-galactosyl-N-acetylglucosaminide 3-alpha-L-fucosyltransferase 9 (359 aa).

The Cytoplasmic segment spans residues 1–11 (MTSTSKGILRP). Residues 12 to 32 (FLIVCIILGCFVACLLIYIKP) traverse the membrane as a helical; Signal-anchor for type II membrane protein segment. Residues 33 to 359 (TNSWVFSPME…VGNLEKWFWN (327 aa)) lie on the Lumenal side of the membrane. N-linked (GlcNAc...) asparagine glycosylation occurs at Asn62. The tract at residues 63-168 (ETTILVWVWP…RRDSDIQVPY (106 aa)) is acceptor-binding. Gln75 contacts a beta-D-galactosyl-(1-&gt;4)-N-acetyl-beta-D-glucosaminyl derivative. Intrachain disulfides connect Cys82/Cys335, Cys91/Cys338, and Cys190/Cys238. The N-linked (GlcNAc...) asparagine glycan is linked to Asn101. Glu137 contributes to the a beta-D-galactosyl-(1-&gt;4)-N-acetyl-beta-D-glucosaminyl derivative binding site. The active-site Nucleophile is the Glu137. Glu137 serves as a coordination point for GDP-beta-L-fucose. Residue Asn153 is glycosylated (N-linked (GlcNAc...) asparagine). Tyr168, Val192, Ser194, Asn195, Arg202, Val226, Tyr241, Asn246, Tyr252, Glu255, and Lys256 together coordinate GDP-beta-L-fucose. The donor-binding stretch occupies residues 169–326 (GFLTVSTSPF…NWRKDFTVNL (158 aa)). Residues 327 to 359 (PRFWESHACLACDHVKRHQEYKSVGNLEKWFWN) form an acceptor-binding region.

It belongs to the glycosyltransferase 10 family. In terms of assembly, homodimer. In terms of processing, N-glycosylated with complex-type N-glycans.

The protein resides in the golgi apparatus. Its subcellular location is the trans-Golgi network membrane. It is found in the golgi apparatus membrane. The enzyme catalyses a beta-D-galactosyl-(1-&gt;4)-N-acetyl-beta-D-glucosaminyl derivative + GDP-beta-L-fucose = a beta-D-galactosyl-(1-&gt;4)-[alpha-L-fucosyl-(1-&gt;3)]-N-acetyl-beta-D-glucosaminyl derivative + GDP + H(+). It carries out the reaction an alpha-Neu5Ac-(2-&gt;3)-beta-D-Gal-(1-&gt;4)-beta-D-GlcNAc-(1-&gt;3)-beta-D-Gal-(1-&gt;4)-beta-D-GlcNAc derivative + GDP-beta-L-fucose = an alpha-Neu5Ac-(2-&gt;3)-beta-D-Gal-(1-&gt;4)-beta-D-GlcNAc-(1-&gt;3)-beta-D-Gal-(1-&gt;4)-[alpha-L-Fuc-(1-&gt;3)]-beta-D-GlcNAc derivative + GDP + H(+). It catalyses the reaction alpha-N-glycoloylneuraminosyl-(2-&gt;3)-beta-D-galactosyl-(1-&gt;4)-N-acetyl-beta-D-glucosaminyl-(1-&gt;3)-beta-D-galactosyl-(1-&gt;4)-N-acetyl-beta-D-glucosaminyl-(1-&gt;3)-beta-D-galactosyl-(1-&gt;4)-beta-D-glucosyl-(1&lt;-&gt;1')-ceramide + GDP-beta-L-fucose = alpha-N-glycoloylneuraminosyl-(2-&gt;3)-beta-D-galactosyl-(1-&gt;4)-N-acetyl-beta-D-glucosaminyl-(1-&gt;3)-beta-D-galactosyl-(1-&gt;4)-[alpha-L-fucosyl-(1-&gt;3)]-N-acetyl-beta-D-glucosaminyl-(1-&gt;3)-beta-D-galactosyl-(1-&gt;4)-beta-D-glucosyl-(1&lt;-&gt;1')-ceramide + GDP + H(+). The catalysed reaction is alpha-D-galactosyl-(1-&gt;3)-beta-D-galactosyl-(1-&gt;4)-N-acetyl-beta-D-glucosaminyl-(1-&gt;3)-beta-D-galactosyl-(1-&gt;4)-beta-D-glucosyl-(1&lt;-&gt;1')-ceramide + GDP-beta-L-fucose = a neolactoside IV(3)-alpha-Gal,III(3)-alpha-Fuc-nLc4Cer + GDP + H(+). The enzyme catalyses a neolactoside nLc4Cer + GDP-beta-L-fucose = a neolactoside III(3)-alpha-Fuc-nLc4Cer + GDP + H(+). It carries out the reaction an N-acetyl-alpha-neuraminyl-(2-&gt;3)-beta-D-galactosyl-(1-&gt;4)-N-acetyl-beta-D-glucosaminyl derivative + GDP-beta-L-fucose = an alpha-Neu5Ac-(2-&gt;3)-beta-D-Gal-(1-&gt;4)-[alpha-L-Fuc-(1-&gt;3)]-beta-D-GlcNAc derivative + GDP + H(+). It catalyses the reaction beta-D-Gal-(1-&gt;4)-beta-D-GlcNAc-(1-&gt;3)-beta-D-Gal-(1-&gt;4)-D-Glc + GDP-beta-L-fucose = beta-D-Gal-(1-&gt;4)-[alpha-L-Fuc-(1-&gt;3)]-beta-D-GlcNAc-(1-&gt;3)-beta-D-Gal-(1-&gt;4)-D-Glc + GDP + H(+). The catalysed reaction is an alpha-L-Fuc-(1-&gt;2)-beta-D-Gal-(1-&gt;4)-beta-D-GlcNAc derivative + GDP-beta-L-fucose = an alpha-L-Fuc-(1-&gt;2)-beta-D-Gal-(1-&gt;4)-[alpha-L-Fuc-(1-&gt;3)]-beta-D-GlcNAc derivative + GDP + H(+). Its pathway is protein modification; protein glycosylation. It participates in glycolipid biosynthesis. Its activity is regulated as follows. Activated by Mn2+. Its function is as follows. Catalyzes alpha(1-&gt;3) linkage of fucosyl moiety transferred from GDP-beta-L-fucose to N-acetyl glucosamine (GlcNAc) within type 2 lactosamine (LacNAc, beta-D-Gal-(1-&gt;4)-beta-D-GlcNAc-) glycan attached to glycolipids and N- or O-linked glycoproteins. Fucosylates distal type 2 LacNAc and its fucosylated (H-type 2 LacNAc) and sialylated (sialyl-type 2 LacNAc) derivatives to form Lewis x (Lex) (CD15) and Lewis y (Ley) antigenic epitopes involved in cell adhesion and differentiation. Generates Lex epitopes in the brain, presumably playing a role in the maintenance of neuronal stemness and neurite outgrowth in progenitor neural cells. Fucosylates the internal type 2 LacNAc unit of the polylactosamine chain to form VIM-2 antigen that serves as recognition epitope for SELE. Can also modify milk oligosaccharides in particular type 2 tetrasaccharide LNnT. This is 4-galactosyl-N-acetylglucosaminide 3-alpha-L-fucosyltransferase 9 from Rattus norvegicus (Rat).